A 349-amino-acid chain; its full sequence is Beta-hexosaminidase (349 aa).

Substrate-binding positions include Asp-64, Arg-72, Arg-138, and 168–169; that span reads KH. The active-site Proton donor/acceptor is the His-181. Residue Asp-252 is the Nucleophile of the active site.

The protein belongs to the glycosyl hydrolase 3 family. NagZ subfamily.

Its subcellular location is the cytoplasm. It catalyses the reaction Hydrolysis of terminal non-reducing N-acetyl-D-hexosamine residues in N-acetyl-beta-D-hexosaminides.. It participates in cell wall biogenesis; peptidoglycan recycling. Functionally, plays a role in peptidoglycan recycling by cleaving the terminal beta-1,4-linked N-acetylglucosamine (GlcNAc) from peptide-linked peptidoglycan fragments, giving rise to free GlcNAc, anhydro-N-acetylmuramic acid and anhydro-N-acetylmuramic acid-linked peptides. In Methylobacillus flagellatus (strain ATCC 51484 / DSM 6875 / VKM B-1610 / KT), this protein is Beta-hexosaminidase.